The sequence spans 698 residues: MKKRHLLSLLALGISTACYGETYPAPIGPSQSDFGGVGLLQTPTARMAREGELSLNYRDNDQYRYYSASVQLFPWLETTLRYTDVRTRQYSSVEAFSGDQTYKDKAFDLKLRLWEESYWLPQVAVGARDIGGTGLFDAEYLVASKAWGPFDFTLGLGWGYLGTSGNVKNPLCSASDKYCYRDNSYKQAGSIDGSQMFHGPASLFGGVEYQTPWQPLRLKLEYEGNNYQQDFAGKLEQKSKFNVGAIYRVTDWADVNLSYERGNTFMFGVTLRTNFNDLRPSYNDNARPQYQPQPQDAILQHSVVANQLTLLKYNAGLADPQIQAKGDTLYVTGEQVKYRDSREGIIRANRIVMNDLPDGIKTIRITENRLNMPQVTTETDVASLKNHLAGEPLGHETTLAQKRVEPVVPQSTEQGWYIDKSRFDFHIDPVLNQSVGGPENFYMYQLGVMGTADLWLTDHLLTTGSLFANLANNYDKFNYTNPPQDSHLPRVRTHVREYVQNDVYVNNLQANYFQHLGNGFYGQVYGGYLETMFGGAGAEVLYRPLDSNWAFGLDANYVKQRDWRSAKDMMKFTDYSVKTGHLTAYWTPSFAQDVLVKASVGQYLAGDKGGTLEIAKRFDSGVVVGGYATITNVSKEEYGEGDFTKGVYVSVPLDLFSSGPTRSRAAIGWTPLTRDGGQQLGRKFQLYDMTSDRSVNFR.

The first 17 residues, Met1–Ala17, serve as a signal peptide directing secretion. A lipid anchor (N-palmitoyl cysteine) is attached at Cys18. Cys18 carries S-diacylglycerol cysteine lipidation.

The protein to E.coli YmcA.

It localises to the cell membrane. This is an uncharacterized protein from Escherichia coli (strain K12).